The following is a 456-amino-acid chain: 26S proteasome non-ATPase regulatory subunit 12 (456 aa).

A2 carries the N-acetylalanine modification. A Glycyl lysine isopeptide (Lys-Gly) (interchain with G-Cter in SUMO1); alternate cross-link involves residue K92. K92 is covalently cross-linked (Glycyl lysine isopeptide (Lys-Gly) (interchain with G-Cter in SUMO2); alternate). N6-acetyllysine occurs at positions 221 and 368. In terms of domain architecture, PCI spans 242 to 420 (SICKHYRAIY…GIINFQRPKD (179 aa)).

This sequence belongs to the proteasome subunit p55 family. In terms of assembly, component of the 19S proteasome regulatory particle complex. The 26S proteasome consists of a 20S core particle (CP) and two 19S regulatory subunits (RP). The regulatory particle is made of a lid composed of 9 subunits including PSMD12, a base containing 6 ATPases and few additional components. Interacts with ERCC6.

Functionally, component of the 26S proteasome, a multiprotein complex involved in the ATP-dependent degradation of ubiquitinated proteins. This complex plays a key role in the maintenance of protein homeostasis by removing misfolded or damaged proteins, which could impair cellular functions, and by removing proteins whose functions are no longer required. Therefore, the proteasome participates in numerous cellular processes, including cell cycle progression, apoptosis, or DNA damage repair. This is 26S proteasome non-ATPase regulatory subunit 12 (PSMD12) from Homo sapiens (Human).